Here is a 396-residue protein sequence, read N- to C-terminus: Purple acid phosphatase 5 (396 aa).

The first 13 residues, 1 to 13 (MSLETFPPPAGYN), serve as a signal peptide directing secretion. Asparagine 58 is a glycosylation site (N-linked (GlcNAc...) asparagine). Aspartate 125 is a binding site for Fe cation. A glycan (N-linked (GlcNAc...) asparagine) is linked at asparagine 133. 2 residues coordinate Fe cation: aspartate 153 and tyrosine 156. Aspartate 153 lines the Zn(2+) pocket. Position 190 (asparagine 190) interacts with Zn(2+). Asparagine 190 lines the substrate pocket. Asparagine 238 is a glycosylation site (N-linked (GlcNAc...) asparagine). Histidine 250 contacts Zn(2+). The Proton donor role is filled by histidine 260. A Zn(2+)-binding site is contributed by histidine 287. 287-289 (HVH) contributes to the substrate binding site. Histidine 289 lines the Fe cation pocket. 2 N-linked (GlcNAc...) asparagine glycosylation sites follow: asparagine 303 and asparagine 360.

Belongs to the metallophosphoesterase superfamily. Purple acid phosphatase family. As to quaternary structure, homodimer. Requires Fe cation as cofactor. It depends on Zn(2+) as a cofactor.

Its subcellular location is the secreted. It carries out the reaction a phosphate monoester + H2O = an alcohol + phosphate. The sequence is that of Purple acid phosphatase 5 (PAP5) from Arabidopsis thaliana (Mouse-ear cress).